The following is a 212-amino-acid chain: phospholipase A2 inhibitor and Ly6/PLAUR domain-containing protein (212 aa).

Residues 1-24 form the signal peptide; sequence MILFRRHRTFLLAFTLLCTLLGLG. Residues 27–117 enclose the UPAR/Ly6 domain; it reads LTCEVCKGSG…NSGSVPPPLN (91 aa). Intrachain disulfides connect C29–C53, C32–C39, C46–C74, C80–C101, C102–C107, C126–C152, and C145–C173.

This sequence belongs to the CNF-like-inhibitor family.

Its subcellular location is the secreted. The polypeptide is phospholipase A2 inhibitor and Ly6/PLAUR domain-containing protein (Pinlyp) (Mus musculus (Mouse)).